A 261-amino-acid chain; its full sequence is MLAKRIIPCLDVHGGRVVKGTNFVNLRDAGDPVELAAVYDKEGADELVFLDITASSDGRAIMLDVVRRTAEEVFIPFTVGGGLRTVEDIREMLKAGADKISLNTSAVQTPQLIGDSAWKFGSQCIVVAIDARRRRDEEGRLLEGWEVYTHGGRKPTGIDVLEWARKVEELGCGEILLTSMDKDGTKDGYDIPLTRAVSEAVKIPVIASGGVGNLEHICEGLTAGKADAALAASIFHYKEYTIRETKEYLRGKGVHVRKWRD.

Catalysis depends on residues aspartate 11 and aspartate 130.

The protein belongs to the HisA/HisF family. As to quaternary structure, heterodimer of HisH and HisF.

It localises to the cytoplasm. The enzyme catalyses 5-[(5-phospho-1-deoxy-D-ribulos-1-ylimino)methylamino]-1-(5-phospho-beta-D-ribosyl)imidazole-4-carboxamide + L-glutamine = D-erythro-1-(imidazol-4-yl)glycerol 3-phosphate + 5-amino-1-(5-phospho-beta-D-ribosyl)imidazole-4-carboxamide + L-glutamate + H(+). The protein operates within amino-acid biosynthesis; L-histidine biosynthesis; L-histidine from 5-phospho-alpha-D-ribose 1-diphosphate: step 5/9. Functionally, IGPS catalyzes the conversion of PRFAR and glutamine to IGP, AICAR and glutamate. The HisF subunit catalyzes the cyclization activity that produces IGP and AICAR from PRFAR using the ammonia provided by the HisH subunit. This is Imidazole glycerol phosphate synthase subunit HisF from Heliobacterium mobile (Heliobacillus mobilis).